Reading from the N-terminus, the 464-residue chain is V-type ATP synthase beta chain (464 aa).

Belongs to the ATPase alpha/beta chains family.

In terms of biological role, produces ATP from ADP in the presence of a proton gradient across the membrane. The V-type beta chain is a regulatory subunit. The protein is V-type ATP synthase beta chain of Streptococcus sanguinis (strain SK36).